A 164-amino-acid polypeptide reads, in one-letter code: ATP synthase subunit b (164 aa).

Residues 4–24 traverse the membrane as a helical segment; the sequence is LGINPTLFIAQLINFLLLIFI.

Belongs to the ATPase B chain family. As to quaternary structure, F-type ATPases have 2 components, F(1) - the catalytic core - and F(0) - the membrane proton channel. F(1) has five subunits: alpha(3), beta(3), gamma(1), delta(1), epsilon(1). F(0) has four main subunits: a(1), b(2) and c(10-14). The alpha and beta chains form an alternating ring which encloses part of the gamma chain. F(1) is attached to F(0) by a central stalk formed by the gamma and epsilon chains, while a peripheral stalk is formed by the delta and b chains.

It is found in the cell membrane. Functionally, f(1)F(0) ATP synthase produces ATP from ADP in the presence of a proton or sodium gradient. F-type ATPases consist of two structural domains, F(1) containing the extramembraneous catalytic core and F(0) containing the membrane proton channel, linked together by a central stalk and a peripheral stalk. During catalysis, ATP synthesis in the catalytic domain of F(1) is coupled via a rotary mechanism of the central stalk subunits to proton translocation. Component of the F(0) channel, it forms part of the peripheral stalk, linking F(1) to F(0). This is ATP synthase subunit b from Chloroflexus aurantiacus (strain ATCC 29366 / DSM 635 / J-10-fl).